The following is a 166-amino-acid chain: Crossover junction endodeoxyribonuclease RuvC (166 aa).

Catalysis depends on residues Asp11, Glu71, and Asp142. The Mg(2+) site is built by Asp11, Glu71, and Asp142.

It belongs to the RuvC family. Homodimer which binds Holliday junction (HJ) DNA. The HJ becomes 2-fold symmetrical on binding to RuvC with unstacked arms; it has a different conformation from HJ DNA in complex with RuvA. In the full resolvosome a probable DNA-RuvA(4)-RuvB(12)-RuvC(2) complex forms which resolves the HJ. Mg(2+) is required as a cofactor.

It localises to the cytoplasm. It catalyses the reaction Endonucleolytic cleavage at a junction such as a reciprocal single-stranded crossover between two homologous DNA duplexes (Holliday junction).. In terms of biological role, the RuvA-RuvB-RuvC complex processes Holliday junction (HJ) DNA during genetic recombination and DNA repair. Endonuclease that resolves HJ intermediates. Cleaves cruciform DNA by making single-stranded nicks across the HJ at symmetrical positions within the homologous arms, yielding a 5'-phosphate and a 3'-hydroxyl group; requires a central core of homology in the junction. The consensus cleavage sequence is 5'-(A/T)TT(C/G)-3'. Cleavage occurs on the 3'-side of the TT dinucleotide at the point of strand exchange. HJ branch migration catalyzed by RuvA-RuvB allows RuvC to scan DNA until it finds its consensus sequence, where it cleaves and resolves the cruciform DNA. The protein is Crossover junction endodeoxyribonuclease RuvC of Maricaulis maris (strain MCS10) (Caulobacter maris).